The primary structure comprises 77 residues: Large ribosomal subunit protein bL28 (77 aa).

This sequence belongs to the bacterial ribosomal protein bL28 family.

The protein is Large ribosomal subunit protein bL28 of Paracidovorax citrulli (strain AAC00-1) (Acidovorax citrulli).